A 381-amino-acid polypeptide reads, in one-letter code: NF-kappa-B inhibitor-like protein 1 (381 aa).

The segment at Met-1–Glu-34 is disordered. ANK repeat units lie at residues Gly-64–His-93 and His-97–Ile-130. Disordered stretches follow at residues Gly-129–Gln-167 and Gly-186–Leu-294. Ser-150 carries the phosphoserine modification. Residues Ser-150–Ala-159 show a composition bias toward acidic residues. Composition is skewed to basic and acidic residues over residues Arg-218–Arg-228 and Gln-238–Arg-287.

As to quaternary structure, interacts with CACTIN (via N-terminal domain); the interaction occurs in a proinflammatory-independent manner. As to expression, detected in different cell types including monocytes, T-cells, B-cells and hepatocytes.

It localises to the nucleus. In terms of biological role, involved in the regulation of innate immune response. Acts as negative regulator of Toll-like receptor and interferon-regulatory factor (IRF) signaling pathways. Contributes to the negative regulation of transcriptional activation of NF-kappa-B target genes in response to endogenous proinflammatory stimuli. This chain is NF-kappa-B inhibitor-like protein 1 (NFKBIL1), found in Homo sapiens (Human).